We begin with the raw amino-acid sequence, 170 residues long: Large ribosomal subunit protein uL22z (170 aa).

Belongs to the universal ribosomal protein uL22 family.

In Hordeum vulgare (Barley), this protein is Large ribosomal subunit protein uL22z.